Reading from the N-terminus, the 260-residue chain is MIKEKDTPKNEVIIETENLNLFYTDFKALNKINMKILKNSITALIGPSGCGKSTFLRTLNRMNDLVEGIKIEGNVIYEGKNIYSNNFDILELRRKIGMVFQTPNPFLMSIYDNISYGPKIHGTKDKKKLDEIVEQSLKKSALWNEVKDKLHTNALSLSGGQQQRLCIARTLAIEPNVILMDEPTSALDPISTGKIEELIINLKESYTIIIVTHNMQQAGRISDRTAFFLNGCIEEESSTDELFFNPKNTKTEEYISGKFG.

The ABC transporter domain maps to 14–255 (IETENLNLFY…PKNTKTEEYI (242 aa)). 46-53 (GPSGCGKS) is a binding site for ATP.

It belongs to the ABC transporter superfamily. Phosphate importer (TC 3.A.1.7) family. As to quaternary structure, the complex is composed of two ATP-binding proteins (PstB), two transmembrane proteins (PstC and PstA) and a solute-binding protein (PstS).

It is found in the cell inner membrane. It carries out the reaction phosphate(out) + ATP + H2O = ADP + 2 phosphate(in) + H(+). In terms of biological role, part of the ABC transporter complex PstSACB involved in phosphate import. Responsible for energy coupling to the transport system. This is Phosphate import ATP-binding protein PstB from Borreliella burgdorferi (strain ATCC 35210 / DSM 4680 / CIP 102532 / B31) (Borrelia burgdorferi).